The chain runs to 208 residues: FMN-dependent NADH:quinone oxidoreductase (208 aa).

FMN contacts are provided by residues 17–19, 99–102, and 143–146; these read SNS, MWNL, and SRGG.

This sequence belongs to the azoreductase type 1 family. In terms of assembly, homodimer. The cofactor is FMN.

The catalysed reaction is 2 a quinone + NADH + H(+) = 2 a 1,4-benzosemiquinone + NAD(+). The enzyme catalyses N,N-dimethyl-1,4-phenylenediamine + anthranilate + 2 NAD(+) = 2-(4-dimethylaminophenyl)diazenylbenzoate + 2 NADH + 2 H(+). Functionally, quinone reductase that provides resistance to thiol-specific stress caused by electrophilic quinones. Its function is as follows. Also exhibits azoreductase activity. Catalyzes the reductive cleavage of the azo bond in aromatic azo compounds to the corresponding amines. This Staphylococcus aureus (strain Mu50 / ATCC 700699) protein is FMN-dependent NADH:quinone oxidoreductase.